The sequence spans 1482 residues: Chromosome partition protein MukB (1482 aa).

Residue glycine 34–serine 41 participates in ATP binding. Coiled coils occupy residues leucine 326 to tyrosine 416, arginine 509 to valine 603, arginine 780 to serine 805, glutamate 835 to glutamate 923, leucine 979 to glycine 1116, and glutamate 1210 to valine 1265. The tract at residues proline 666–arginine 783 is flexible hinge.

The protein belongs to the SMC family. MukB subfamily. In terms of assembly, homodimerization via its hinge domain. Binds to DNA via its C-terminal region. Interacts, and probably forms a ternary complex, with MukE and MukF via its C-terminal region. The complex formation is stimulated by calcium or magnesium. Interacts with tubulin-related protein FtsZ.

Its subcellular location is the cytoplasm. The protein resides in the nucleoid. Functionally, plays a central role in chromosome condensation, segregation and cell cycle progression. Functions as a homodimer, which is essential for chromosome partition. Involved in negative DNA supercoiling in vivo, and by this means organize and compact chromosomes. May achieve or facilitate chromosome segregation by condensation DNA from both sides of a centrally located replisome during cell division. The protein is Chromosome partition protein MukB of Enterobacter sp. (strain 638).